We begin with the raw amino-acid sequence, 336 residues long: Zinc transporter ZIP11 (336 aa).

A run of 7 helical transmembrane segments spans residues 12–32, 44–64, 75–95, 188–208, 258–278, 280–300, and 316–336; these read LLGTLLTWGLTAAGSALVFIF, LGFAAGVMLAASYWSLLAPAI, SFAFVPAAVGFLVGAGFVYLA, IMLLILAITIHNIPEGLAVGV, WYGQLSGMVEPIAGLLGTIAI, LAEPLLPYALAFAAGAMVYVV, and LASWTCIFGFIVMMSLDVGLG.

Belongs to the ZIP transporter (TC 2.A.5) family.

The protein localises to the cell membrane. The protein resides in the nucleus. Its subcellular location is the cytoplasm. It is found in the golgi apparatus. Its function is as follows. Functions as a cellular zinc transporter. This Xenopus tropicalis (Western clawed frog) protein is Zinc transporter ZIP11 (slc39a11).